A 254-amino-acid polypeptide reads, in one-letter code: 4-hydroxy-tetrahydrodipicolinate reductase (254 aa).

Residues 8-13 (GASGKM), 87-89 (GTT), and 111-114 (ATNM) contribute to the NAD(+) site. The Proton donor/acceptor role is filled by His143. Position 144 (His144) interacts with (S)-2,3,4,5-tetrahydrodipicolinate. Residue Lys147 is the Proton donor of the active site. 153-154 (GT) contacts (S)-2,3,4,5-tetrahydrodipicolinate.

This sequence belongs to the DapB family.

Its subcellular location is the cytoplasm. The enzyme catalyses (S)-2,3,4,5-tetrahydrodipicolinate + NAD(+) + H2O = (2S,4S)-4-hydroxy-2,3,4,5-tetrahydrodipicolinate + NADH + H(+). The catalysed reaction is (S)-2,3,4,5-tetrahydrodipicolinate + NADP(+) + H2O = (2S,4S)-4-hydroxy-2,3,4,5-tetrahydrodipicolinate + NADPH + H(+). Its pathway is amino-acid biosynthesis; L-lysine biosynthesis via DAP pathway; (S)-tetrahydrodipicolinate from L-aspartate: step 4/4. Catalyzes the conversion of 4-hydroxy-tetrahydrodipicolinate (HTPA) to tetrahydrodipicolinate. This Campylobacter curvus (strain 525.92) protein is 4-hydroxy-tetrahydrodipicolinate reductase.